Consider the following 479-residue polypeptide: Pup--protein ligase (479 aa).

A Mg(2+)-binding site is contributed by E17. Residue R62 participates in ATP binding. Y64 is a Mg(2+) binding site. D66 (proton acceptor) is an active-site residue. Position 72 (E72) interacts with Mg(2+). Residues S75 and W432 each contribute to the ATP site.

This sequence belongs to the Pup ligase/Pup deamidase family. Pup-conjugating enzyme subfamily.

It carries out the reaction ATP + [prokaryotic ubiquitin-like protein]-L-glutamate + [protein]-L-lysine = ADP + phosphate + N(6)-([prokaryotic ubiquitin-like protein]-gamma-L-glutamyl)-[protein]-L-lysine.. It participates in protein degradation; proteasomal Pup-dependent pathway. Its pathway is protein modification; protein pupylation. Catalyzes the covalent attachment of the prokaryotic ubiquitin-like protein modifier Pup to the proteasomal substrate proteins, thereby targeting them for proteasomal degradation. This tagging system is termed pupylation. The ligation reaction involves the side-chain carboxylate of the C-terminal glutamate of Pup and the side-chain amino group of a substrate lysine. The protein is Pup--protein ligase of Corynebacterium diphtheriae (strain ATCC 700971 / NCTC 13129 / Biotype gravis).